The primary structure comprises 379 residues: Queuine tRNA-ribosyltransferase (379 aa).

Asp-94 serves as the catalytic Proton acceptor. Substrate contacts are provided by residues 94–98 (DSGGF), Asp-148, Gln-191, and Gly-218. Residues 249-255 (GVGSPDS) are RNA binding. Asp-268 serves as the catalytic Nucleophile. The tract at residues 273–277 (TRIAR) is RNA binding; important for wobble base 34 recognition. Positions 306, 308, 311, and 337 each coordinate Zn(2+).

Belongs to the queuine tRNA-ribosyltransferase family. As to quaternary structure, homodimer. Within each dimer, one monomer is responsible for RNA recognition and catalysis, while the other monomer binds to the replacement base PreQ1. Zn(2+) is required as a cofactor.

It carries out the reaction 7-aminomethyl-7-carbaguanine + guanosine(34) in tRNA = 7-aminomethyl-7-carbaguanosine(34) in tRNA + guanine. The protein operates within tRNA modification; tRNA-queuosine biosynthesis. In terms of biological role, catalyzes the base-exchange of a guanine (G) residue with the queuine precursor 7-aminomethyl-7-deazaguanine (PreQ1) at position 34 (anticodon wobble position) in tRNAs with GU(N) anticodons (tRNA-Asp, -Asn, -His and -Tyr). Catalysis occurs through a double-displacement mechanism. The nucleophile active site attacks the C1' of nucleotide 34 to detach the guanine base from the RNA, forming a covalent enzyme-RNA intermediate. The proton acceptor active site deprotonates the incoming PreQ1, allowing a nucleophilic attack on the C1' of the ribose to form the product. After dissociation, two additional enzymatic reactions on the tRNA convert PreQ1 to queuine (Q), resulting in the hypermodified nucleoside queuosine (7-(((4,5-cis-dihydroxy-2-cyclopenten-1-yl)amino)methyl)-7-deazaguanosine). The polypeptide is Queuine tRNA-ribosyltransferase (Listeria welshimeri serovar 6b (strain ATCC 35897 / DSM 20650 / CCUG 15529 / CIP 8149 / NCTC 11857 / SLCC 5334 / V8)).